The following is a 6629-amino-acid chain: Replicase polyprotein 1ab (6629 aa).

Over 1 to 1750 the chain is Cytoplasmic; it reads MASSLKQGVS…VASYKTVLCK (1750 aa). The region spanning 675–780 is the Ubiquitin-like 1 domain; the sequence is KTVTFGETTV…SCHLIYRDYE (106 aa). The disordered stretch occupies residues 783–802; that stretch reads DDIEEEDAEECDTDSGEAEE. A Macro domain is found at 1003 to 1179; it reads VKPATCEKPK…YFDVTCKQKT (177 aa). In terms of domain architecture, Ubiquitin-like 2 spans 1175-1227; sequence CKQKTIYLTEDGVKYRSIVLKPGDSLGQFGQVYAKNKIVFTADDVEDKEILYV. Positions 1236-1497 constitute a Peptidase C16 domain; the sequence is EYYGLDAQKY…SKSVKEDVSN (262 aa). Cys-1274 functions as the For PL-PRO activity in the catalytic mechanism. The Zn(2+) site is built by Cys-1353, Cys-1355, Cys-1387, and Cys-1390. The segment at 1353–1390 adopts a C4-type; degenerate zinc-finger fold; sequence CNCGIKSYELRGLEACIQPVRATNLLHFKTQYSNCPTC. Catalysis depends on for PL-PRO activity residues His-1437 and Asp-1448. The chain crosses the membrane as a helical span at residues 1751 to 1771; it reads VVLATLLIVWFVYTSNPVMFT. Residues 1751 to 1864 are HD1; it reads VVLATLLIVW…KPVAGFVIIC (114 aa). A 3Ecto domain is found at 1769-1833; sequence MFTGIRVLDF…AYSVEQVYKD (65 aa). Residues 1772–1843 are Lumenal-facing; that stretch reads GIRVLDFLFE…AASGFIFNWN (72 aa). Cystine bridges form between Cys-1785/Cys-1811 and Cys-1802/Cys-1808. Residues 1844-1864 form a helical membrane-spanning segment; sequence WLYLVFLILFVKPVAGFVIIC. Residues 1865-2280 lie on the Cytoplasmic side of the membrane; it reads YCVKYLVLNS…TFKCFKSYFK (416 aa). Residues 1911 to 2001 are Y1; sequence YIQVHHILYC…KLKRHVKPTA (91 aa). Positions 1911 to 2263 constitute a CoV Nsp3 Y domain; it reads YIQVHHILYC…HTQKLLVEKK (353 aa). Zn(2+) contacts are provided by His-1915, Cys-1920, Cys-1925, Cys-1928, Cys-1961, His-1964, Cys-1968, and Cys-1971. A ZF1 region spans residues 1915-1928; that stretch reads HHILYCKDVTCEVC. A ZF2 region spans residues 1961-1971; it reads CKRHNWYCRNC. Residues 2002-2104 form a Y2 region; it reads YAYHVVDEAC…ILDQALYEQL (103 aa). The segment at 2002–2263 is coV-Y; it reads YAYHVVDEAC…HTQKLLVEKK (262 aa). The Y3 stretch occupies residues 2105-2163; the sequence is VVEPVSKSVIDKVCSILSSIISVDTAALNYKAGTLRDALLSITKDEEAVDMAIFCHNHD. Residues 2164-2263 are Y4; that stretch reads VDYTGDGFTN…HTQKLLVEKK (100 aa). Residues 2281–2301 form a helical membrane-spanning segment; it reads WLLIFYILFTACCSGYYYMEV. The tract at residues 2281–2664 is HD2; sequence WLLIFYILFT…LACCYLGFII (384 aa). Topologically, residues 2302–2559 are lumenal; it reads SKSFVHPMYD…FFTGVNPNIY (258 aa). Residues 2560-2580 traverse the membrane as a helical segment; the sequence is MQLATMFLILVVVVLIFAMVI. Residues 2581-2611 lie on the Cytoplasmic side of the membrane; that stretch reads KFQGVFKAYATTVFITMLVWVINAFILCVHS. A helical membrane pass occupies residues 2612 to 2632; the sequence is YNSVLAVILLVLYCYASLVTS. Over 2633–2643 the chain is Lumenal; sequence RNTVIIMHCWL. The chain crosses the membrane as a helical span at residues 2644-2664; the sequence is VFTFGLIVPTWLACCYLGFII. Topologically, residues 2665 to 3096 are cytoplasmic; that stretch reads YMYTPLFLWC…SSFVRKATSW (432 aa). The region spanning 2684–2779 is the Nsp4C domain; the sequence is LYDGNEFVGN…RYSIGVSRLQ (96 aa). Residues 2780 to 3086 form the Peptidase C30 domain; sequence SGFKKLVSPS…FNQIGGVRLQ (307 aa). Catalysis depends on for 3CL-PRO activity residues His-2820 and Cys-2922. Residues 3097–3117 form a helical membrane-spanning segment; that stretch reads FWSRCVLACFLFVLCAIVLFT. Residues 3097–3317 are HD3; that stretch reads FWSRCVLACF…WLCTCYFGLY (221 aa). Topologically, residues 3118 to 3121 are lumenal; that stretch reads AVPL. Residues 3122-3142 traverse the membrane as a helical segment; the sequence is KFYVYAAVILLMAVLFISFTV. The Cytoplasmic portion of the chain corresponds to 3143 to 3151; the sequence is KHVMAYMDT. A helical membrane pass occupies residues 3152 to 3172; that stretch reads FLLPTLITVIIGVCAEVPFIY. Residues 3173 to 3188 are Lumenal-facing; sequence NTLISQVVIFLSQWYD. Residues 3189–3209 form a helical membrane-spanning segment; that stretch reads PVVFDTMVPWMFLPLVLYTAF. The Cytoplasmic portion of the chain corresponds to 3210-3257; the sequence is KCVQGCYMNSFNTSLLMLYQFVKLGFVIYTSSNTLTAYTEGNWELFFE. A helical transmembrane segment spans residues 3258-3278; it reads LVHTTVLANVSSNSLIGLFVF. Topologically, residues 3279–3296 are lumenal; the sequence is KCAKWMLYYCNATYLNNY. A helical transmembrane segment spans residues 3297–3317; that stretch reads VLMAVMVNCIGWLCTCYFGLY. Residues 3318 to 6629 are Cytoplasmic-facing; that stretch reads WWVNKVFGLT…FTSDSFVCTM (3312 aa). One can recognise a RdRp Nsp7 cofactor domain in the interval 3380–3462; that stretch reads AKLSDVKCTT…DILKRSTVLQ (83 aa). The RdRp Nsp8 cofactor domain occupies 3463–3672; it reads SVTQEFSHIP…GHNKVDVVLQ (210 aa). Residues 3673-3783 enclose the Nsp9 ssRNA-binding domain; it reads NNELMPHGVK…GAISNVVVLQ (111 aa). Residues 3785–3926 form the ExoN/MTase coactivator domain; it reads KGHETEEVDA…CDSLRQPKSS (142 aa). Zn(2+) is bound by residues Cys-3858, Cys-3861, His-3867, Cys-3878, Cys-3904, Cys-3907, Cys-3915, and Cys-3917. Zinc fingers lie at residues 3858 to 3878 and 3904 to 3917; these read CLYC…DGRC and CTVC…GCQC. Positions 3940-4198 constitute a NiRAN domain; that stretch reads YLNRVRGSSE…APERYFEYDV (259 aa). The 99-residue stretch at 4203–4301 folds into the Nsp12 Interface domain; sequence KSYDLLKYDY…MNQDNTMSFS (99 aa). Zn(2+) contacts are provided by His-4232, Cys-4238, Cys-4243, Cys-4247, and Cys-4424. In terms of domain architecture, Nsp12 RNA-dependent RNA polymerase spans 4302 to 4868; that stretch reads KMGLSQLMQF…NMYRAPTTLQ (567 aa). Positions 4304-4517 are rdRp Fingers N-ter; the sequence is GLSQLMQFVG…HQKILKSIVN (214 aa). Positions 4518–4556 are rdRp Palm N-ter; that stretch reads TRNASVVIGTTKFYGGWDNMLRNLIQGVEDPILMGWDYP. The RdRp catalytic domain occupies 4548-4710; that stretch reads PILMGWDYPK…CYNNTLAKQG (163 aa). Positions 4557–4615 are rdRp Fingers C-ter; that stretch reads KCDRAMPNLLRIAASLVLARKHTNCCSWSERIYRLYNECAQVLSETVLATGGIYVKPGG. 3 residues coordinate Zn(2+): His-4578, Cys-4581, and Cys-4582. The interval 4616 to 4751 is rdRp Palm C-ter; the sequence is TSSGDATTAY…EKGPHEFCSQ (136 aa). Residues Ser-4695, Asp-4696, and Asp-4697 contribute to the active site. The tract at residues 4752–4868 is rdRp Thumb; it reads HTMLVEVDGE…NMYRAPTTLQ (117 aa). Residues 4869 to 4981 form the CV ZBD domain; it reads SCGVCVVCNS…DDFNQLATTN (113 aa). Cys-4873, Cys-4876, Cys-4884, Cys-4887, Cys-4894, Cys-4897, His-4901, His-4907, Cys-4918, Cys-4923, Cys-4940, and His-4943 together coordinate Zn(2+). One can recognise a (+)RNA virus helicase ATP-binding domain in the interval 5125-5305; sequence MVPECFVNNI…MVCVKPDIFL (181 aa). 5150-5157 is an ATP binding site; that stretch reads GPPGSGKS. The 172-residue stretch at 5306 to 5477 folds into the (+)RNA virus helicase C-terminal domain; the sequence is AKCYRCPKEI…QGTGLFKICN (172 aa). The ExoN domain occupies 5539 to 5753; it reads MFITRDEAIR…RCLAINNAFC (215 aa). Active-site residues include Asp-5557, Glu-5559, and Glu-5658. Cys-5674, Cys-5676, Cys-5692, His-5695, His-5723, Cys-5727, and His-5730 together coordinate Zn(2+). Catalysis depends on residues His-5734 and Asp-5739. Cys-5745 provides a ligand contact to Zn(2+). Residues 5762–5989 enclose the N7-MTase domain; that stretch reads YPHIANEDEV…NLWKSFSALQ (228 aa). Residue 5797–5803 coordinates S-adenosyl-L-methionine; that stretch reads DIGNPKG. The tract at residues 5877–5891 is gpppA-binding; the sequence is CNGGSLYVNKHAFYT. Zn(2+) is bound by residues Cys-5915, Cys-5935, Cys-5946, and His-5949. Residues 5990–6050 form the Nsp15 N-terminal oligomerization domain; sequence SIDNIAYNMY…SVAFELYAKR (61 aa). One can recognise an AV-Nsp11N/CoV-Nsp15M domain in the interval 6051-6166; sequence NIRTLPNNRI…VYKRVNGAFV (116 aa). The NendoU domain occupies 6183-6324; it reads EPRSDIERDF…EDGSIKTCYP (142 aa). Residues His-6212, His-6227, Lys-6267, Lys-6371, Asp-6455, Lys-6499, and Glu-6532 contribute to the active site. The Nidovirus-type SAM-dependent 2'-O-MTase domain occupies 6327 to 6626; that stretch reads QSAWTCGYNM…NTSFTSDSFV (300 aa).

Belongs to the coronaviruses polyprotein 1ab family. In terms of assembly, interacts with host PHB and PHB2. Interacts with papain-like protease and non-structural protein 6. As to quaternary structure, monomer. Homodimer. Only the homodimer shows catalytic activity. In terms of assembly, eight copies of nsp7 and eight copies of nsp8 assemble to form a heterohexadecamer dsRNA-encircling ring structure. Eight copies of nsp7 and eight copies of nsp8 assemble to form a heterohexadecamer dsRNA-encircling ring structure. Interacts with ORF6 protein. As to quaternary structure, homodimer. In terms of assembly, homododecamer. Interacts with proofreading exoribonuclease nsp14 and 2'-O-methyltransferase nsp16; these interactions enhance nsp14 and nsp16 enzymatic activities. Interacts with host DDX1 (via C-terminus). Interacts with non-structural protein 10. As to quaternary structure, homohexamer. In terms of assembly, interacts with non-structural protein 10. Requires Mn(2+) as cofactor. It depends on Zn(2+) as a cofactor. In terms of processing, specific enzymatic cleavages in vivo by its own proteases yield mature proteins. 3C-like proteinase nsp5 liberates nsps 6-16 from the polyprotein. Papain-like and 3C-like proteinases are autocatalytically processed. N-glycosylated.

The protein resides in the host endoplasmic reticulum membrane. The protein localises to the host cytoplasm. It is found in the host perinuclear region. It localises to the host endoplasmic reticulum. Its subcellular location is the host endoplasmic reticulum-Golgi intermediate compartment. The enzyme catalyses Thiol-dependent hydrolysis of ester, thioester, amide, peptide and isopeptide bonds formed by the C-terminal Gly of ubiquitin (a 76-residue protein attached to proteins as an intracellular targeting signal).. The catalysed reaction is RNA(n) + a ribonucleoside 5'-triphosphate = RNA(n+1) + diphosphate. It catalyses the reaction ATP + H2O = ADP + phosphate + H(+). It carries out the reaction uridylyl-uridylyl-ribonucleotide-RNA = a 3'-end uridylyl-2',3'-cyclophospho-uridine-RNA + a 5'-end dephospho-ribonucleoside-RNA. The enzyme catalyses a 5'-end diphospho-ribonucleoside in mRNA + GTP + H(+) = a 5'-end (5'-triphosphoguanosine)-ribonucleoside in mRNA + diphosphate. The catalysed reaction is a 5'-end (N(7)-methyl 5'-triphosphoguanosine)-ribonucleoside in mRNA + S-adenosyl-L-methionine = a 5'-end (N(7)-methyl 5'-triphosphoguanosine)-(2'-O-methyl-ribonucleoside) in mRNA + S-adenosyl-L-homocysteine + H(+). Functionally, multifunctional protein involved in the transcription and replication of viral RNAs. Contains the proteinases responsible for the cleavages of the polyprotein. May play a role in the modulation of host cell survival signaling pathway by interacting with host PHB and PHB2. Indeed, these two proteins play a role in maintaining the functional integrity of the mitochondria and protecting cells from various stresses. Its function is as follows. Responsible for the cleavages located at the N-terminus of the replicase polyprotein. In addition, PL-PRO possesses a deubiquitinating/deISGylating activity and processes both 'Lys-48'- and 'Lys-63'-linked polyubiquitin chains from cellular substrates. In terms of biological role, plays a role in host membrane rearrangement that leads to creation of cytoplasmic double-membrane vesicles (DMV) necessary for viral replication. Alone is able to induce paired membranes. Coexpression of nsp3 and nsp4 does not result in the formation of DMVs. Functionally, responsible for the majority of cleavages as it cleaves the C-terminus of replicase polyprotein at 11 sites. Recognizes substrates containing the core sequence [ILMVF]-Q-|-[SGACN]. Inhibited by the substrate-analog Cbz-Val-Asn-Ser-Thr-Leu-Gln-CMK. Forms a hexadecamer with nsp8 (8 subunits of each) that may participate in viral replication by acting as a primase. Alternatively, may synthesize substantially longer products than oligonucleotide primers. Its function is as follows. Forms a hexadecamer with nsp7 (8 subunits of each) that may participate in viral replication by acting as a primase. Alternatively, may synthesize substantially longer products than oligonucleotide primers. In terms of biological role, forms a primer, NSP9-pU, which is utilized by the polymerase for the initiation of RNA chains. Interacts with ribosome signal recognition particle RNA (SRP). Together with NSP8, suppress protein integration into the cell membrane, thereby disrupting host immune defenses. Functionally, plays a pivotal role in viral transcription by stimulating both nsp14 3'-5' exoribonuclease and nsp16 2'-O-methyltransferase activities. Therefore plays an essential role in viral mRNAs cap methylation. RNA-directed RNA polymerase that catalyzes the transcription of viral genomic and subgenomic RNAs. Acts in complex with nsp7 and nsp8 to transcribe both the minus and positive strands of genomic RNA. The kinase-like NiRAN domain of NSP12 attaches one or more nucleotides to the amino terminus of NSP9, forming a covalent RNA-protein intermediate that serves as transcription/replication primer. Subgenomic RNAs (sgRNAs) are formed by discontinuous transcription: The polymerase has the ability to pause at transcription-regulating sequences (TRS) and jump to the leader TRS, resulting in a major deletion. This creates a series of subgenomic RNAs that are replicated, transcribed and translated. In addition, Nsp12 is a subunit of the viral RNA capping enzyme that catalyzes the RNA guanylyltransferase reaction for genomic and sub-genomic RNAs. Subsequently, the NiRAN domain transfers RNA to GDP, and forms the core cap structure GpppA-RNA. Its function is as follows. Multi-functional protein with a zinc-binding domain in N-terminus displaying RNA and DNA duplex-unwinding activities with 5' to 3' polarity. Activity of helicase is dependent on magnesium. In terms of biological role, enzyme possessing two different activities: an exoribonuclease activity acting on both ssRNA and dsRNA in a 3' to 5' direction and a N7-guanine methyltransferase activity. Acts as a proofreading exoribonuclease for RNA replication, thereby lowering The sensitivity of the virus to RNA mutagens. Functionally, plays a role in viral transcription/replication and prevents the simultaneous activation of host cell dsRNA sensors, such as MDA5/IFIH1, OAS, and PKR. Acts by degrading the 5'-polyuridines generated during replication of the poly(A) region of viral genomic and subgenomic RNAs. Catalyzes a two-step reaction in which a 2'3'-cyclic phosphate (2'3'-cP) is first generated by 2'-O transesterification, which is then hydrolyzed to a 3'-phosphate (3'-P). If not degraded, poly(U) RNA would hybridize with poly(A) RNA tails and activate host dsRNA sensors. Methyltransferase that mediates mRNA cap 2'-O-ribose methylation to the 5'-cap structure of viral mRNAs. N7-methyl guanosine cap is a prerequisite for binding of nsp16. Therefore plays an essential role in viral mRNAs cap methylation which is essential to evade immune system. The polypeptide is Replicase polyprotein 1ab (rep) (Gallus gallus (Chicken)).